The sequence spans 249 residues: Probable transcriptional regulatory protein Rru_A1086 (249 aa).

The protein belongs to the TACO1 family.

The protein resides in the cytoplasm. The polypeptide is Probable transcriptional regulatory protein Rru_A1086 (Rhodospirillum rubrum (strain ATCC 11170 / ATH 1.1.1 / DSM 467 / LMG 4362 / NCIMB 8255 / S1)).